Reading from the N-terminus, the 121-residue chain is UPF0102 protein BVU_1879 (121 aa).

The protein belongs to the UPF0102 family.

The chain is UPF0102 protein BVU_1879 from Phocaeicola vulgatus (strain ATCC 8482 / DSM 1447 / JCM 5826 / CCUG 4940 / NBRC 14291 / NCTC 11154) (Bacteroides vulgatus).